Reading from the N-terminus, the 274-residue chain is Hydroxyethylthiazole kinase (274 aa).

Residue M49 coordinates substrate. Residues R125 and T173 each contribute to the ATP site. Substrate is bound at residue G200.

This sequence belongs to the Thz kinase family. Mg(2+) is required as a cofactor.

It carries out the reaction 5-(2-hydroxyethyl)-4-methylthiazole + ATP = 4-methyl-5-(2-phosphooxyethyl)-thiazole + ADP + H(+). It participates in cofactor biosynthesis; thiamine diphosphate biosynthesis; 4-methyl-5-(2-phosphoethyl)-thiazole from 5-(2-hydroxyethyl)-4-methylthiazole: step 1/1. In terms of biological role, catalyzes the phosphorylation of the hydroxyl group of 4-methyl-5-beta-hydroxyethylthiazole (THZ). This Desulfosudis oleivorans (strain DSM 6200 / JCM 39069 / Hxd3) (Desulfococcus oleovorans) protein is Hydroxyethylthiazole kinase.